The primary structure comprises 179 residues: Large ribosomal subunit protein uL5 (179 aa).

This sequence belongs to the universal ribosomal protein uL5 family. Part of the 50S ribosomal subunit; part of the 5S rRNA/L5/L18/L25 subcomplex. Contacts the 5S rRNA and the P site tRNA. Forms a bridge to the 30S subunit in the 70S ribosome.

This is one of the proteins that bind and probably mediate the attachment of the 5S RNA into the large ribosomal subunit, where it forms part of the central protuberance. In the 70S ribosome it contacts protein S13 of the 30S subunit (bridge B1b), connecting the 2 subunits; this bridge is implicated in subunit movement. Contacts the P site tRNA; the 5S rRNA and some of its associated proteins might help stabilize positioning of ribosome-bound tRNAs. The sequence is that of Large ribosomal subunit protein uL5 from Prochlorococcus marinus (strain MIT 9215).